The primary structure comprises 193 residues: Probable GTP-binding protein EngB (193 aa).

In terms of domain architecture, EngB-type G spans Ser22–Gln193. GTP-binding positions include Gly30–Ser37, Gly57–Leu61, Asp75–Gly78, Thr142–Asp145, and Tyr172–Ser174. Ser37 and Thr59 together coordinate Mg(2+).

It belongs to the TRAFAC class TrmE-Era-EngA-EngB-Septin-like GTPase superfamily. EngB GTPase family. Mg(2+) serves as cofactor.

Its function is as follows. Necessary for normal cell division and for the maintenance of normal septation. The sequence is that of Probable GTP-binding protein EngB from Pelodictyon phaeoclathratiforme (strain DSM 5477 / BU-1).